Consider the following 96-residue polypeptide: Co-chaperonin GroES (96 aa).

It belongs to the GroES chaperonin family. Heptamer of 7 subunits arranged in a ring. Interacts with the chaperonin GroEL.

Its subcellular location is the cytoplasm. Functionally, together with the chaperonin GroEL, plays an essential role in assisting protein folding. The GroEL-GroES system forms a nano-cage that allows encapsulation of the non-native substrate proteins and provides a physical environment optimized to promote and accelerate protein folding. GroES binds to the apical surface of the GroEL ring, thereby capping the opening of the GroEL channel. The protein is Co-chaperonin GroES of Thiobacillus denitrificans (strain ATCC 25259 / T1).